The sequence spans 184 residues: Peptide deformylase 2 (184 aa).

Fe cation is bound by residues cysteine 110 and histidine 153. The active site involves glutamate 154. Histidine 157 serves as a coordination point for Fe cation.

This sequence belongs to the polypeptide deformylase family. It depends on Fe(2+) as a cofactor.

It catalyses the reaction N-terminal N-formyl-L-methionyl-[peptide] + H2O = N-terminal L-methionyl-[peptide] + formate. In terms of biological role, removes the formyl group from the N-terminal Met of newly synthesized proteins. Requires at least a dipeptide for an efficient rate of reaction. N-terminal L-methionine is a prerequisite for activity but the enzyme has broad specificity at other positions. The chain is Peptide deformylase 2 from Bacillus cereus (strain ATCC 14579 / DSM 31 / CCUG 7414 / JCM 2152 / NBRC 15305 / NCIMB 9373 / NCTC 2599 / NRRL B-3711).